Here is a 175-residue protein sequence, read N- to C-terminus: Translation initiation factor IF-3 (175 aa).

It belongs to the IF-3 family. As to quaternary structure, monomer.

It is found in the cytoplasm. IF-3 binds to the 30S ribosomal subunit and shifts the equilibrium between 70S ribosomes and their 50S and 30S subunits in favor of the free subunits, thus enhancing the availability of 30S subunits on which protein synthesis initiation begins. The polypeptide is Translation initiation factor IF-3 (Blochmanniella floridana).